The sequence spans 841 residues: MAPPAASQRYPSPSQPSGKSEVSDLKTQLRQLAGSRAPGVDDSKRDLYKKVISYMTIGIDVSSVFGEMVMCSATSDIVLKKMCYLYVGNYAKGNPDLSLLTINFLQRDCKDEDPMIRGLALRSLCSLRVPNLVEYLVGPLGSGLKDNNSYVRTIAVTGVLKLYHISPSTCIDADFPATLKSLMLHDSDAQVVANCLSALQEIWSLEASHSEEACREKESLLSKPVIYYFLNRIKEFNEWAQCLILELAVKYVPSDSNDIFDIMNLLEDRLQHANGAVVLATVKVFLQLTLSMTDVHQQVYERIKSPLLTLVSSGSPEQSYAILSHLHLLVVRAPFIFAADYKHFYCQYNEPSYVKKLKLEMLTAVANESNTYEIVTELCEYAANVDIAIARESIRAVGKIALQQYDVNAIVDRLLQFLEMEKDYVTAETLVLVKDLLRKYPQWSHDCISVVGGISSKNIQEPKAKAALIWMLGEYAQDMSDAPYVLENLIENWEEEHSAEVRLHLLTAAMKCFFKRAPETQKALGTALAAGIADFHQDVHDRALFYYRVLQYDVHVAERVVSPPKQAVSVFADTQSSEIKDRVFDEFNSLSVIYQKPSYMFTDKEHRGPFEFSDEVGNISITPEASSDIVPAQQYEANDKDLLLGIDEKDENKGVSNNNGSAYTAPSLESSSNITSQMQELAISGPATSATTPQSFGFDDLFGLGLSTAPAPTPSPPLLKLNARAALDPGAFQQKWRQLPISLTQECSVNPQGIAALTVPQSLIKHMQSHSIHCIASGGQSPNFKFFFFAQKESEPSNYLTECIINTSSAKAQIKVKADEQSTCQAFTTVFETALSKFGMP.

2 disordered regions span residues 1–25 and 650–671; these read MAPP…VSDL and DENK…LESS. Composition is skewed to polar residues over residues 9–25 and 654–671; these read RYPS…VSDL and GVSN…LESS.

It belongs to the adaptor complexes large subunit family. As to quaternary structure, adaptor protein complexes are heterotetramers composed of two large adaptins (beta-type subunit and alpha-type or delta-type or epsilon-type or gamma-type subunit), a medium adaptin (mu-type subunit) and a small adaptin (sigma-type subunit). Interacts with AHK2.

The protein resides in the golgi apparatus. It is found in the trans-Golgi network. Its subcellular location is the cytoplasmic vesicle. The protein localises to the clathrin-coated vesicle membrane. Its function is as follows. Subunit of clathrin-associated adaptor protein complex that plays a role in protein sorting in the late-Golgi/trans-Golgi network (TGN) and/or endosomes. The AP complexes mediate both the recruitment of clathrin to membranes and the recognition of sorting signals within the cytosolic tails of transmembrane cargo molecules. This is Beta-adaptin-like protein A (BETAA-AD) from Arabidopsis thaliana (Mouse-ear cress).